Here is a 125-residue protein sequence, read N- to C-terminus: MHAPQPITAATGEAGEDRALRYLQARGLAVVSRNYRCKGGEIDLVMRDAAGALVFVEVRARVARSTQRFGGAAASVTPAKQRRLIAAAEDFLARQVEDVPACRFDVIAIDGARIEWMRDAFGVDA.

The protein belongs to the UPF0102 family.

The chain is UPF0102 protein Rpic_3463 from Ralstonia pickettii (strain 12J).